Consider the following 173-residue polypeptide: 3-hydroxydecanoyl-[acyl-carrier-protein] dehydratase (173 aa).

Histidine 71 is an active-site residue.

Belongs to the thioester dehydratase family. FabA subfamily. In terms of assembly, homodimer.

It is found in the cytoplasm. It carries out the reaction a (3R)-hydroxyacyl-[ACP] = a (2E)-enoyl-[ACP] + H2O. The enzyme catalyses (3R)-hydroxydecanoyl-[ACP] = (2E)-decenoyl-[ACP] + H2O. It catalyses the reaction (2E)-decenoyl-[ACP] = (3Z)-decenoyl-[ACP]. It functions in the pathway lipid metabolism; fatty acid biosynthesis. Functionally, necessary for the introduction of cis unsaturation into fatty acids. Catalyzes the dehydration of (3R)-3-hydroxydecanoyl-ACP to E-(2)-decenoyl-ACP and then its isomerization to Z-(3)-decenoyl-ACP. Can catalyze the dehydratase reaction for beta-hydroxyacyl-ACPs with saturated chain lengths up to 16:0, being most active on intermediate chain length. In Bradyrhizobium sp. (strain BTAi1 / ATCC BAA-1182), this protein is 3-hydroxydecanoyl-[acyl-carrier-protein] dehydratase.